The following is an 859-amino-acid chain: Outer membrane usher protein AfaC (859 aa).

A signal peptide spans M1–R28.

The protein belongs to the fimbrial export usher family.

It is found in the cell outer membrane. Functionally, involved in the export and assembly of AFA-III afimbrial adhesin subunits across the outer membrane. In Escherichia coli, this protein is Outer membrane usher protein AfaC (afaC).